We begin with the raw amino-acid sequence, 105 residues long: Urease subunit beta (105 aa).

It belongs to the urease beta subunit family. In terms of assembly, heterotrimer of UreA (gamma), UreB (beta) and UreC (alpha) subunits. Three heterotrimers associate to form the active enzyme.

Its subcellular location is the cytoplasm. It catalyses the reaction urea + 2 H2O + H(+) = hydrogencarbonate + 2 NH4(+). It functions in the pathway nitrogen metabolism; urea degradation; CO(2) and NH(3) from urea (urease route): step 1/1. This is Urease subunit beta from Prochlorococcus marinus (strain MIT 9313).